The primary structure comprises 354 residues: Malate dehydrogenase 1, peroxisomal (354 aa).

A peroxisomal targeting signal PTS2 region spans residues 6–14; that stretch reads RIARISAHL. NAD(+) contacts are provided by residues 49 to 55 and aspartate 75; that span reads GAAGGIG. 2 residues coordinate substrate: arginine 122 and arginine 128. Residues asparagine 135 and 158–160 contribute to the NAD(+) site; that span reads ISN. Substrate-binding residues include asparagine 160 and arginine 194. Histidine 218 (proton acceptor) is an active-site residue. An NAD(+)-binding site is contributed by methionine 269.

It belongs to the LDH/MDH superfamily. MDH type 1 family. As to quaternary structure, homodimer. As to expression, expressed in rosette leaves at low levels.

It is found in the peroxisome. It catalyses the reaction (S)-malate + NAD(+) = oxaloacetate + NADH + H(+). Functionally, catalyzes a reversible NAD-dependent dehydrogenase reaction involved in central metabolism and redox homeostasis between organelle compartments. Peroxisomal NAD-dependent malate dehydrogenase involved in fatty acid beta-oxidation. Reoxidizes NADH from the beta-oxidation and provides NAD for the conversion of fatty acyl-CoA to acetyl-CoA. Does not participate directly in the glyoxylate cycle. Required for maintenance of photosynthetic rates under photorespiratory conditions, and carbon flow during photorespiration. Supplies NADH reductant to the peroxisomal hydroxypyruvate reductase (HPR), which reduces hydroxypyruvate into glycerate in the photorespiratory cycle. This is Malate dehydrogenase 1, peroxisomal from Arabidopsis thaliana (Mouse-ear cress).